The chain runs to 1037 residues: Tyrosine-protein kinase-like otk (1037 aa).

Residues 1–23 (MDMDVMMISMCILASTFMAPGWA) form the signal peptide. Ig-like C2-type domains follow at residues 24 to 109 (STSG…REAS), 110 to 199 (PPAK…RVMS), 251 to 365 (PEDL…APLN), 368 to 464 (PGLL…VSIN), and 469 to 559 (PKFS…VQLV). The Extracellular portion of the chain corresponds to 24–582 (STSGFLRVPQ…GGDGFLVTRA (559 aa)). 5 cysteine pairs are disulfide-bonded: Cys-47–Cys-96, Cys-138–Cys-188, Cys-276–Cys-354, Cys-399–Cys-448, and Cys-491–Cys-543. N-linked (GlcNAc...) asparagine glycosylation is found at Asn-336, Asn-418, Asn-430, Asn-445, Asn-513, and Asn-525. Residues 583–603 (VLITMTVALAYIVLVVGLMLW) form a helical membrane-spanning segment. Residues 604–1037 (CRYRRQARKA…SKAMQSVAEK (434 aa)) are Cytoplasmic-facing. Disordered regions lie at residues 623–683 (AGGD…KSVY) and 720–777 (SAQS…KEEE). Residues 658–676 (KSNGDAQKSDDTACSQQSR) show a composition bias toward polar residues. Residue Ser-681 is modified to Phosphoserine. Residues 693 to 1031 (LSELLQIGRG…QLGSALSKAM (339 aa)) enclose the Protein kinase; inactive domain. A compositionally biased stretch (basic and acidic residues) spans 723-734 (SDKDADTEKQHS). The segment covering 739 to 749 (GSGGSGSGSGS) has biased composition (gly residues). Over residues 768-777 (DDIEEIKEEE) the composition is skewed to acidic residues.

This sequence belongs to the protein kinase superfamily. Tyr protein kinase family. Insulin receptor subfamily. As to quaternary structure, interacts with plexA; component of a receptor complex that mediates the repulsive signaling in response to Semaphorin ligands.

It is found in the cell membrane. Its function is as follows. Acts as a calcium-dependent, homophilic cell adhesion molecule that regulates neural recognition during the development of the nervous system. Component of the repulsive Plexin signaling response to regulate motor axon guidance at the embryonic stage. Also component of a receptor complex that is required in the adult visual system to innervate the lamina layer; specific targeting of R1-R6 axons. This Drosophila pseudoobscura pseudoobscura (Fruit fly) protein is Tyrosine-protein kinase-like otk.